Here is a 256-residue protein sequence, read N- to C-terminus: C-8 sterol isomerase (256 aa).

The disordered stretch occupies residues 1-31 (MPPKKQSSSGGNKPSGSGSSSGRSSSGSSCR). Low complexity predominate over residues 7 to 30 (SSSGGNKPSGSGSSSGRSSSGSSC). The chain crosses the membrane as a helical span at residues 40-60 (IGGWLKFFAILFALVAPIAYV).

It belongs to the ERG2 family.

The protein localises to the endoplasmic reticulum membrane. It functions in the pathway steroid metabolism; ergosterol biosynthesis; ergosterol from zymosterol: step 2/5. Catalyzes the reaction which results in unsaturation at C-7 in the B ring of sterols. The protein is C-8 sterol isomerase (erg-1) of Neurospora crassa (strain ATCC 24698 / 74-OR23-1A / CBS 708.71 / DSM 1257 / FGSC 987).